Here is a 197-residue protein sequence, read N- to C-terminus: Fucoxanthin-chlorophyll a-c binding protein F, chloroplastic (197 aa).

Residues 1–31 constitute a chloroplast transit peptide; it reads MKFAVFASLLASAAAFAPAQQSARTSVATNM. A run of 3 helical transmembrane segments spans residues 73-94, 114-134, and 174-196; these read ISMLAVVGYLVQENGIRLPGDI, ISTAGIAQIVAFIGFLEIAVM, and GRAAQMGILALMVHEKLGVSLIP.

The protein belongs to the fucoxanthin chlorophyll protein family. As to quaternary structure, the LHC complex of chromophytic algae is composed of fucoxanthin, chlorophyll A and C bound non-covalently by fucoxanthin chlorophyll proteins (FCPs). The ratio of the pigments in lhc; fucoxanthin: chlorophyll C: chlorophyll A is (0.6-1): (0.1-0.3): (1).

It localises to the plastid. The protein resides in the chloroplast thylakoid membrane. Functionally, the light-harvesting complex (LHC) functions as a light receptor, it captures and delivers excitation energy to photosystems with which it is closely associated. In chromophytic algae, LHC is associated with photosystem II, energy being transferred from fucoxanthin and chlorophyll C to chlorophyll A and the photosynthetic reaction centers where it is used to synthesize ATP and reducing power. This is Fucoxanthin-chlorophyll a-c binding protein F, chloroplastic (FCPF) from Phaeodactylum tricornutum (Diatom).